We begin with the raw amino-acid sequence, 539 residues long: Probable protein kinase UbiB (539 aa).

The chain crosses the membrane as a helical span at residues 23–43 (DLLFALPLPWWMLAVRFVLPW). The 368-residue stretch at 125–492 (RFDETPLASA…WHDRKDEPVL (368 aa)) folds into the Protein kinase domain. ATP-binding positions include 131 to 139 (LASASVAQV) and Lys-153. Residue Asp-288 is the Proton acceptor of the active site. Helical transmembrane passes span 494 to 514 (LIGA…SEAA) and 517 to 537 (LLTL…YLIV).

It belongs to the ABC1 family. UbiB subfamily.

The protein resides in the cell inner membrane. The protein operates within cofactor biosynthesis; ubiquinone biosynthesis [regulation]. Its function is as follows. Is probably a protein kinase regulator of UbiI activity which is involved in aerobic coenzyme Q (ubiquinone) biosynthesis. The sequence is that of Probable protein kinase UbiB from Pseudomonas syringae pv. tomato (strain ATCC BAA-871 / DC3000).